The chain runs to 345 residues: Biotin synthase (345 aa).

A Radical SAM core domain is found at 66-293 (NTVQLSTLLS…RAMVRLSAGR (228 aa)). [4Fe-4S] cluster contacts are provided by Cys-81, Cys-85, and Cys-88. Cys-125, Cys-156, Cys-216, and Arg-288 together coordinate [2Fe-2S] cluster.

Belongs to the radical SAM superfamily. Biotin synthase family. In terms of assembly, homodimer. [4Fe-4S] cluster serves as cofactor. The cofactor is [2Fe-2S] cluster.

It catalyses the reaction (4R,5S)-dethiobiotin + (sulfur carrier)-SH + 2 reduced [2Fe-2S]-[ferredoxin] + 2 S-adenosyl-L-methionine = (sulfur carrier)-H + biotin + 2 5'-deoxyadenosine + 2 L-methionine + 2 oxidized [2Fe-2S]-[ferredoxin]. Its pathway is cofactor biosynthesis; biotin biosynthesis; biotin from 7,8-diaminononanoate: step 2/2. In terms of biological role, catalyzes the conversion of dethiobiotin (DTB) to biotin by the insertion of a sulfur atom into dethiobiotin via a radical-based mechanism. The protein is Biotin synthase of Cupriavidus metallidurans (strain ATCC 43123 / DSM 2839 / NBRC 102507 / CH34) (Ralstonia metallidurans).